The primary structure comprises 419 residues: D-amino acid dehydrogenase (419 aa).

3–17 (VLVLGAGVAGVSSVW) lines the FAD pocket.

It belongs to the DadA oxidoreductase family. FAD serves as cofactor.

The enzyme catalyses a D-alpha-amino acid + A + H2O = a 2-oxocarboxylate + AH2 + NH4(+). The protein operates within amino-acid degradation; D-alanine degradation; NH(3) and pyruvate from D-alanine: step 1/1. In terms of biological role, oxidative deamination of D-amino acids. This chain is D-amino acid dehydrogenase, found in Neisseria gonorrhoeae (strain ATCC 700825 / FA 1090).